Here is a 164-residue protein sequence, read N- to C-terminus: Protein-export protein SecB (164 aa).

Belongs to the SecB family. In terms of assembly, homotetramer, a dimer of dimers. One homotetramer interacts with 1 SecA dimer.

The protein resides in the cytoplasm. In terms of biological role, one of the proteins required for the normal export of preproteins out of the cell cytoplasm. It is a molecular chaperone that binds to a subset of precursor proteins, maintaining them in a translocation-competent state. It also specifically binds to its receptor SecA. This chain is Protein-export protein SecB, found in Rhodopseudomonas palustris (strain BisB18).